Reading from the N-terminus, the 156-residue chain is Inner membrane protein YlaC (156 aa).

At 1 to 35 (MTEIQRLLTETIESLNTREKRDNKPRFSISFIRKH) the chain is on the cytoplasmic side. A helical transmembrane segment spans residues 36–56 (PGLFIGMYVAFFATLAVMLQS). At 57–58 (ET) the chain is on the periplasmic side. Residues 59–79 (LSGSVWLLVVLFILLNGFFFF) traverse the membrane as a helical segment. At 80–156 (DVYPRYRYED…FTLARAESTS (77 aa)) the chain is on the cytoplasmic side.

It is found in the cell inner membrane. This Escherichia coli (strain K12) protein is Inner membrane protein YlaC (ylaC).